We begin with the raw amino-acid sequence, 261 residues long: Bcl-2-binding component 3, isoforms 3/4 (261 aa).

A disordered region spans residues 27–261 (QICGPRERHG…ASAGDFLCTM (235 aa)). The segment covering 40-50 (PGGQLPGARRG) has biased composition (low complexity). Pro residues predominate over residues 53 to 63 (PRRPAPLPARP). Residues 64-73 (PGALGSVLRP) show a composition bias toward low complexity. 2 stretches are compositionally biased toward basic residues: residues 74–87 (LRAR…RPHP) and 95–106 (RPHRPTRRHRRP). Over residues 124–146 (PGRSSALALAGGAAPGVARAQRP) the composition is skewed to low complexity. Gly residues predominate over residues 147-171 (GGSGGRSHPGGPGSPRGGGTVGPGD). Residues 172–197 (RGPAAADGGRPQRTVRAAETRGAAAA) show a composition bias toward low complexity.

As to quaternary structure, does not interact with BCL2.

Does not affect cell growth. The protein is Bcl-2-binding component 3, isoforms 3/4 (BBC3) of Homo sapiens (Human).